The following is a 1146-amino-acid chain: Ankyrin repeat and fibronectin type-III domain-containing protein 1 (1146 aa).

ANK repeat units follow at residues 133–162 (QGNE…PEEL) and 170–199 (EGLT…RESP). The Fibronectin type-III domain maps to 270–366 (MPTNVCLMVT…TTTPACASPS (97 aa)). Positions 607-614 (GLYLGYLK) are highly conserved peptide sequence. 3 disordered regions span residues 855–887 (NSTS…QPCS), 945–964 (VKTP…NPDH), and 1106–1146 (PWAS…SSML). Positions 1131–1146 (EGPTASPMSEILSSML) are enriched in polar residues.

Functionally, may play a role in neuronal function. This is Ankyrin repeat and fibronectin type-III domain-containing protein 1 from Homo sapiens (Human).